Reading from the N-terminus, the 242-residue chain is Venom nerve growth factor 2 (242 aa).

The signal sequence occupies residues 1-18; it reads MSMLCYTLIIAFLIGIWA. A propeptide spanning residues 19–125 is cleaved from the precursor; it reads APQSEDNVPL…ALNRNIQAKR (107 aa). Residues 47–66 show a composition bias toward basic and acidic residues; sequence DLKTSRNTDQRHPAPKKADD. The tract at residues 47 to 70 is disordered; that stretch reads DLKTSRNTDQRHPAPKKADDQELG. Intrachain disulfides connect cysteine 139–cysteine 203, cysteine 181–cysteine 231, and cysteine 191–cysteine 233.

Belongs to the NGF-beta family. Homodimer; non-covalently linked. In terms of tissue distribution, expressed by the venom gland.

The protein resides in the secreted. Functionally, nerve growth factor is important for the development and maintenance of the sympathetic and sensory nervous systems. It stimulates division and differentiation of sympathetic and embryonic sensory neurons as well as basal forebrain cholinergic neurons in the brain. Its relevance in the snake venom is not clear. However, it has been shown to inhibit metalloproteinase-dependent proteolysis of platelet glycoprotein Ib alpha, suggesting a metalloproteinase inhibition to prevent metalloprotease autodigestion and/or protection against prey proteases. Binds a lipid between the two protein chains in the homodimer. The lipid-bound form promotes histamine relase from mouse mast cells, contrary to the lipid-free form. This Pseudechis australis (Mulga snake) protein is Venom nerve growth factor 2.